Reading from the N-terminus, the 418-residue chain is UDP-N-acetylglucosamine 1-carboxyvinyltransferase (418 aa).

Residue 22–23 coordinates phosphoenolpyruvate; sequence KN. Arginine 91 is a binding site for UDP-N-acetyl-alpha-D-glucosamine. Residue cysteine 115 is the Proton donor of the active site. The residue at position 115 (cysteine 115) is a 2-(S-cysteinyl)pyruvic acid O-phosphothioketal. Residues aspartate 305 and isoleucine 327 each coordinate UDP-N-acetyl-alpha-D-glucosamine.

This sequence belongs to the EPSP synthase family. MurA subfamily.

The protein resides in the cytoplasm. It catalyses the reaction phosphoenolpyruvate + UDP-N-acetyl-alpha-D-glucosamine = UDP-N-acetyl-3-O-(1-carboxyvinyl)-alpha-D-glucosamine + phosphate. The protein operates within cell wall biogenesis; peptidoglycan biosynthesis. Functionally, cell wall formation. Adds enolpyruvyl to UDP-N-acetylglucosamine. This chain is UDP-N-acetylglucosamine 1-carboxyvinyltransferase, found in Aeromonas hydrophila subsp. hydrophila (strain ATCC 7966 / DSM 30187 / BCRC 13018 / CCUG 14551 / JCM 1027 / KCTC 2358 / NCIMB 9240 / NCTC 8049).